Here is a 373-residue protein sequence, read N- to C-terminus: Glutamate 5-kinase (373 aa).

Lysine 16 is a binding site for ATP. 3 residues coordinate substrate: serine 56, aspartate 143, and asparagine 155. 175-176 provides a ligand contact to ATP; it reads TD. Residues 281-359 enclose the PUA domain; that stretch reads RGRLTLDDGA…SRIDSLLGYK (79 aa).

The protein belongs to the glutamate 5-kinase family.

Its subcellular location is the cytoplasm. The enzyme catalyses L-glutamate + ATP = L-glutamyl 5-phosphate + ADP. Its pathway is amino-acid biosynthesis; L-proline biosynthesis; L-glutamate 5-semialdehyde from L-glutamate: step 1/2. Functionally, catalyzes the transfer of a phosphate group to glutamate to form L-glutamate 5-phosphate. The protein is Glutamate 5-kinase of Saccharophagus degradans (strain 2-40 / ATCC 43961 / DSM 17024).